The primary structure comprises 293 residues: tRNA pseudouridine synthase B (293 aa).

Residue aspartate 38 is the Nucleophile of the active site.

It belongs to the pseudouridine synthase TruB family. Type 1 subfamily.

It catalyses the reaction uridine(55) in tRNA = pseudouridine(55) in tRNA. Functionally, responsible for synthesis of pseudouridine from uracil-55 in the psi GC loop of transfer RNAs. The protein is tRNA pseudouridine synthase B of Nostoc sp. (strain PCC 7120 / SAG 25.82 / UTEX 2576).